A 224-amino-acid polypeptide reads, in one-letter code: MASSSLFLLGALLVLASWQAIVAYDPSPLQDFCVADMNSPVRVNGFACKNPMDVSSEDFFNAAKFDMPRNTFNKLGSNVTNLNVMEFPGLNTLGISLARIDYAPMGVNPPHIHPRATELLTVLEGTLYVGFVTSNPNKLFSKVVCKGDVFVFPKAMIHFQMNLDHDKPAVAQSALSSQNPGVITIASAVFGSQPPISDDVLTKAFQVEKKLIDWLQSQFWENNY.

Positions 1–23 are cleaved as a signal peptide; sequence MASSSLFLLGALLVLASWQAIVA. Cysteines 33 and 48 form a disulfide. The region spanning 60-213 is the Cupin type-1 domain; sequence FNAAKFDMPR…AFQVEKKLID (154 aa). A glycan (N-linked (GlcNAc...) asparagine) is linked at Asn-78. His-111, His-113, Glu-118, and His-158 together coordinate Mn(2+).

Belongs to the germin family. In terms of assembly, oligomer (believed to be a pentamer but probably hexamer).

The protein localises to the secreted. The protein resides in the extracellular space. It is found in the apoplast. Functionally, plays a role in broad-spectrum disease resistance. Probably has no oxalate oxidase activity even if the active site is conserved. This Oryza sativa subsp. japonica (Rice) protein is Germin-like protein 8-12.